We begin with the raw amino-acid sequence, 519 residues long: ATP synthase subunit beta (519 aa).

Positions 1 to 26 are enriched in low complexity; it reads MAKAATPKRAPARAAAIPAAATPAAK. Positions 1–40 are disordered; the sequence is MAKAATPKRAPARAAAIPAAATPAAKPAKRASTRSAAARS. 197 to 204 provides a ligand contact to ATP; that stretch reads GGAGVGKT.

Belongs to the ATPase alpha/beta chains family. As to quaternary structure, F-type ATPases have 2 components, CF(1) - the catalytic core - and CF(0) - the membrane proton channel. CF(1) has five subunits: alpha(3), beta(3), gamma(1), delta(1), epsilon(1). CF(0) has three main subunits: a(1), b(2) and c(9-12). The alpha and beta chains form an alternating ring which encloses part of the gamma chain. CF(1) is attached to CF(0) by a central stalk formed by the gamma and epsilon chains, while a peripheral stalk is formed by the delta and b chains.

It localises to the cell inner membrane. It carries out the reaction ATP + H2O + 4 H(+)(in) = ADP + phosphate + 5 H(+)(out). Functionally, produces ATP from ADP in the presence of a proton gradient across the membrane. The catalytic sites are hosted primarily by the beta subunits. This is ATP synthase subunit beta from Chelativorans sp. (strain BNC1).